Reading from the N-terminus, the 297-residue chain is uncharacterized protein (297 aa).

The active site involves Glu46.

Belongs to the PhzF family. In terms of assembly, homodimer and homotetramer.

This is an uncharacterized protein from Escherichia coli (strain K12).